The following is a 441-amino-acid chain: ATP-dependent protease ATPase subunit HslU (441 aa).

ATP-binding positions include I18, 60-65 (GVGKTE), D254, E319, and R391.

It belongs to the ClpX chaperone family. HslU subfamily. As to quaternary structure, a double ring-shaped homohexamer of HslV is capped on each side by a ring-shaped HslU homohexamer. The assembly of the HslU/HslV complex is dependent on binding of ATP.

The protein resides in the cytoplasm. Its function is as follows. ATPase subunit of a proteasome-like degradation complex; this subunit has chaperone activity. The binding of ATP and its subsequent hydrolysis by HslU are essential for unfolding of protein substrates subsequently hydrolyzed by HslV. HslU recognizes the N-terminal part of its protein substrates and unfolds these before they are guided to HslV for hydrolysis. The sequence is that of ATP-dependent protease ATPase subunit HslU from Shewanella halifaxensis (strain HAW-EB4).